We begin with the raw amino-acid sequence, 146 residues long: uncharacterized protein (146 aa).

This is an uncharacterized protein from Escherichia coli O157:H7.